A 227-amino-acid polypeptide reads, in one-letter code: E3 ubiquitin-protein ligase ZNRF1 (227 aa).

The tract at residues 1 to 42 is disordered; it reads MGGKQSTAARSRGPFPGVSTDDSAVPPPGGAPHFGHYRTGGG. Gly2 is lipidated: N-myristoyl glycine. The interval 2–10 is required for endosomal and lysosomal localization and myristoylation; it reads GGKQSTAAR. A phosphoserine mark is found at Ser50, Ser52, and Ser53. Positions 65 to 105 are disordered; the sequence is GGVPFSLYTPASRGTGDSERAPGGGGSTSDSTYAHGNGYQE. Phosphotyrosine is present on Tyr103. Ser123 carries the post-translational modification Phosphoserine. The segment at 184–225 adopts an RING-type; atypical zinc-finger fold; sequence CVICLEELLQGDTIARLPCLCIYHKSCIDSWFEVNRSCPEHP.

In terms of assembly, interacts with AKT1, GLUL and TUBB2A. Interacts with ZNRF2. Interacts (via its RING domain) with UBE2N. Interacts (when phosphorylated) with YWHAE. N-myristoylation targets ZNRF1 to intracellular membranes. In terms of processing, phosphorylated by SRC at Tyr-103; leading to 'Lys-63'-linked ubiquitination of TLR3, lysosomal trafficking and degradation.

Its subcellular location is the endosome. It is found in the lysosome. It localises to the membrane. The protein localises to the cytoplasmic vesicle. The protein resides in the secretory vesicle. Its subcellular location is the synaptic vesicle membrane. The enzyme catalyses S-ubiquitinyl-[E2 ubiquitin-conjugating enzyme]-L-cysteine + [acceptor protein]-L-lysine = [E2 ubiquitin-conjugating enzyme]-L-cysteine + N(6)-ubiquitinyl-[acceptor protein]-L-lysine.. Its pathway is protein modification; protein ubiquitination. Functionally, E3 ubiquitin-protein ligase that plays a role in different processes including cell differentiation, receptor recycling or regulation of inflammation. Mediates the ubiquitination of AKT1 and GLUL, thereby playing a role in neuron cells differentiation. Plays a role in the establishment and maintenance of neuronal transmission and plasticity. Regulates Schwann cells differentiation by mediating ubiquitination of GLUL. Promotes neurodegeneration by mediating 'Lys-48'-linked polyubiquitination and subsequent degradation of AKT1 in axons: degradation of AKT1 prevents AKT1-mediated phosphorylation of GSK3B, leading to GSK3B activation and phosphorylation of DPYSL2/CRMP2 followed by destabilization of microtubule assembly in axons. Ubiquitinates the Na(+)/K(+) ATPase alpha-1 subunit/ATP1A1 and thereby influences its endocytosis and/or degradation. Controls ligand-induced EGFR signaling via mediating receptor ubiquitination and recruitment of the ESCRT machinery. Acts as a negative feedback mechanism controlling TLR3 trafficking by mediating TLR3 'Lys-63'-linked polyubiquitination to reduce type I IFN production. Modulates inflammation by promoting caveolin-1/CAV1 ubiquitination and degradation to regulate TLR4-activated immune response. This chain is E3 ubiquitin-protein ligase ZNRF1 (Znrf1), found in Mus musculus (Mouse).